A 196-amino-acid polypeptide reads, in one-letter code: Peptidyl-tRNA hydrolase (196 aa).

Y18 is a tRNA binding site. Catalysis depends on H23, which acts as the Proton acceptor. 3 residues coordinate tRNA: F69, N71, and N117.

Belongs to the PTH family. Monomer.

The protein localises to the cytoplasm. The catalysed reaction is an N-acyl-L-alpha-aminoacyl-tRNA + H2O = an N-acyl-L-amino acid + a tRNA + H(+). Functionally, hydrolyzes ribosome-free peptidyl-tRNAs (with 1 or more amino acids incorporated), which drop off the ribosome during protein synthesis, or as a result of ribosome stalling. Catalyzes the release of premature peptidyl moieties from peptidyl-tRNA molecules trapped in stalled 50S ribosomal subunits, and thus maintains levels of free tRNAs and 50S ribosomes. This chain is Peptidyl-tRNA hydrolase, found in Vibrio campbellii (strain ATCC BAA-1116).